A 558-amino-acid polypeptide reads, in one-letter code: Atlastin-1 (558 aa).

The disordered stretch occupies residues 1 to 28; the sequence is MAKSRRDRNSWGGFSEKSSDWSSEEEEP. The N-terminal hypervariable region (HVR) stretch occupies residues 1–34; it reads MAKSRRDRNSWGGFSEKSSDWSSEEEEPVRKAGP. Residues 1-449 are Cytoplasmic-facing; that stretch reads MAKSRRDRNS…NIFHAARTPA (449 aa). A phosphoserine mark is found at Ser10, Ser22, and Ser23. Positions 64-309 constitute a GB1/RHD3-type G domain; sequence DKEVVAVSVA…LIPWLLSPER (246 aa). 11 residues coordinate GDP: Arg77, Lys78, Gly79, Lys80, Ser81, Phe82, Gln148, Arg217, Asp218, Val276, and Asn279. Positions 77, 78, 79, 80, 81, and 82 each coordinate GTP. Ser81 contacts Mg(2+). Arg217, Asp218, and Val276 together coordinate GTP. Residues 347–438 are 3HB (three-helix bundle) domain; it reads MLQATAEANN…YIQYIKHNDS (92 aa). Residue Lys395 is modified to N6-acetyllysine. Residues 412–439 adopt a coiled-coil conformation; the sequence is EFSRRYLQQLESEIDELYIQYIKHNDSK. The tract at residues 439–447 is linker; it reads KNIFHAART. Residues 450–470 traverse the membrane as a helical segment; that stretch reads TLFVVIFITYVIAGVTGFIGL. A topological domain (lumenal) is located at residue Asp471. The helical transmembrane segment at 472–492 threads the bilayer; the sequence is IIASLCNMIMGLTLITLCTWA. Over 493–558 the chain is Cytoplasmic; that stretch reads YIRYSGEYRE…PTQQPEKKKI (66 aa). The interval 521-558 is autoinhibitory domain; sequence NEALYKLYSAAATHRHLCHQAFPAPKSEPTQQPEKKKI.

It belongs to the TRAFAC class dynamin-like GTPase superfamily. GB1/RHD3 GTPase family. GB1 subfamily. Monomeric and homodimeric. The homodimer, transiently formed by two molecules on opposing membranes, is the active form mediating ER membrane fusion. Interacts with REEP1, REEP5, RTN3 and RTN4 (via the transmembrane region); these proteins are involved in endoplasmic reticulum tubular network organization. Interacts with ZFYVE27; both proteins are involved in endoplasmic reticulum tubular network organization. Interacts with ARL6IP1; both proteins are involved in endoplasmic reticulum tubular network organization. Interacts with SPAST; the interaction is direct, could recruit SPAST to Golgi membranes. Interacts (via N-terminal region) with MAP4K4 (via CNH regulatory domain). May interact with TMED2. Interacts with CPT1C. Post-translationally, phosphorylated. Phosphorylation, by different kinases, of the N-terminal hypervariable region (HVR) regulates the ATL1-mediated membrane tethering step.

It is found in the endoplasmic reticulum membrane. The protein localises to the golgi apparatus membrane. The protein resides in the cell projection. It localises to the axon. It carries out the reaction GTP + H2O = GDP + phosphate + H(+). Atlastin-1 (ATL1) is a membrane-anchored GTPase that mediates the GTP-dependent fusion of endoplasmic reticulum (ER) membranes, maintaining the continuous ER network. It facilitates the formation of three-way junctions where ER tubules intersect. Two atlastin-1 on neighboring ER tubules bind GTP and form loose homodimers through the GB1/RHD3-type G domains and 3HB regions. Upon GTP hydrolysis, the 3HB regions tighten, pulling the membranes together to drive their fusion. After fusion, the homodimer disassembles upon release of inorganic phosphate (Pi). Subsequently, GDP dissociates, resetting the monomers to a conformation ready for a new fusion cycle. May also regulate more or less directly Golgi biogenesis. Indirectly regulates axonal development. This Mus musculus (Mouse) protein is Atlastin-1.